Consider the following 311-residue polypeptide: Catechol 1,2-dioxygenase (311 aa).

Y164 serves as a coordination point for catechol. Fe cation is bound by residues Y164, Y200, H224, and H226. 224–226 (HIH) contributes to the catechol binding site.

Belongs to the intradiol ring-cleavage dioxygenase family. In terms of assembly, homodimer. Requires Fe(3+) as cofactor.

It catalyses the reaction catechol + O2 = cis,cis-muconate + 2 H(+). It participates in aromatic compound metabolism; beta-ketoadipate pathway; 5-oxo-4,5-dihydro-2-furylacetate from catechol: step 1/3. This Acinetobacter baylyi (strain ATCC 33305 / BD413 / ADP1) protein is Catechol 1,2-dioxygenase.